Reading from the N-terminus, the 56-residue chain is Large ribosomal subunit protein bL33 (56 aa).

This sequence belongs to the bacterial ribosomal protein bL33 family.

The chain is Large ribosomal subunit protein bL33 from Tropheryma whipplei (strain TW08/27) (Whipple's bacillus).